The sequence spans 595 residues: DNA damage-binding protein CMR1 (595 aa).

Residues 20–79 are disordered; it reads ALLDSLGLDPAGASSPFGSSPAPTSNKTKPKPKPAPKKRKAAAVIAVDEGPRRRSGRIAG. Low complexity predominate over residues 29 to 46; the sequence is PAGASSPFGSSPAPTSNK. The segment covering 47–60 has biased composition (basic residues); sequence TKPKPKPAPKKRKA. WD repeat units follow at residues 185-226, 255-297, 300-339, and 349-389; these read VTNE…MEKP, HAKN…ELFS, DEDLLINHFDLLPSAQEAWMVDKNGGISHWDTRESKRESG, and GRGA…SISS. Residues 397-429 form a disordered region; sequence AIEEEEEGTSTLSGQSSSLPHDTHPTRESDYST. A compositionally biased stretch (low complexity) spans 405 to 415; that stretch reads TSTLSGQSSSL. Basic and acidic residues predominate over residues 417–426; the sequence is HDTHPTRESD. WD repeat units follow at residues 448–487, 519–556, and 558–595; these read QHGKSCSSAYWDPWGRRILTTSYDDHLRVFNIDPGSSLVD, LRAQWSLNMEYMPHFTVGNMKRTLDVVSATGEKIVGLW, and DDVTAVPTVTASHPNIVDRVVGGNTSGRIQLWSSGDHI.

It belongs to the WD repeat DDB2/WDR76 family.

DNA-binding protein that binds to both single- and double-stranded DNA. Binds preferentially to UV-damaged DNA. May be involved in DNA-metabolic processes. The sequence is that of DNA damage-binding protein CMR1 from Cryptococcus neoformans var. neoformans serotype D (strain B-3501A) (Filobasidiella neoformans).